We begin with the raw amino-acid sequence, 114 residues long: uncharacterized protein (114 aa).

In terms of biological role, possibly involved in pGI2 replication mechanism. This is an uncharacterized protein from Bacillus thuringiensis.